Consider the following 1227-residue polypeptide: Pre-mRNA-splicing factor ATP-dependent RNA helicase PRP16 (1227 aa).

Residue glycine 2 is modified to N-acetylglycine. A Phosphoserine modification is found at serine 56. The span at 60–89 shows a compositional bias: basic and acidic residues; the sequence is REREEKDDGEDKKKSKVSSYKDWEESKDDQ. The disordered stretch occupies residues 60-320; it reads REREEKDDGE…ERQQWEDDQR (261 aa). Residue threonine 117 is modified to Phosphothreonine. The span at 128–201 shows a compositional bias: basic and acidic residues; sequence FWERSRQRER…SRRNEPESPR (74 aa). Residues serine 199 and serine 224 each carry the phosphoserine modification. Positions 222–239 are enriched in polar residues; the sequence is YGSSRRSQWESPSPTPSY. The segment covering 240–263 has biased composition (basic and acidic residues); that stretch reads RDSERSHRLSTRDRDRSVRGKYSD. N6-acetyllysine is present on lysine 260. The segment covering 300–310 has biased composition (acidic residues); sequence GEEGISFDTEE. A compositionally biased stretch (basic and acidic residues) spans 311–320; the sequence is ERQQWEDDQR. Residues lysine 482, lysine 483, and lysine 504 each participate in a glycyl lysine isopeptide (Lys-Gly) (interchain with G-Cter in SUMO2) cross-link. The 164-residue stretch at 542–705 folds into the Helicase ATP-binding domain; the sequence is LTIIRDNSIV…FGNVPIFHIP (164 aa). 555-562 lines the ATP pocket; the sequence is GETGSGKT. The DEAH box motif lies at 652-655; that stretch reads DEAH. The Helicase C-terminal domain maps to 727 to 902; the sequence is AVKQSLQVHL…NVVLLLKSLG (176 aa). Positions 1155–1227 are disordered; it reads GKSRQENRRR…PRRTPARFGL (73 aa). Composition is skewed to basic and acidic residues over residues 1157–1169 and 1181–1194; these read SRQE…KEEA and EQLR…EKRS. Lysine 1166 is covalently cross-linked (Glycyl lysine isopeptide (Lys-Gly) (interchain with G-Cter in SUMO2)). Residue serine 1194 is modified to Phosphoserine.

This sequence belongs to the DEAD box helicase family. DEAH subfamily. PRP16 sub-subfamily. Identified in the spliceosome C complex.

The protein localises to the nucleus. It catalyses the reaction ATP + H2O = ADP + phosphate + H(+). In terms of biological role, probable ATP-binding RNA helicase. Involved in pre-mRNA splicing as component of the spliceosome. In Homo sapiens (Human), this protein is Pre-mRNA-splicing factor ATP-dependent RNA helicase PRP16 (DHX38).